The sequence spans 693 residues: Golgin subfamily A member 6D (693 aa).

The stretch at 14-611 (LEESRQNKLA…KLLELQELVL (598 aa)) forms a coiled coil. 3 disordered regions span residues 20 to 70 (NKLA…GDSQ), 497 to 547 (LPGE…GTEQ), and 662 to 693 (VEPA…MQDT). Positions 537 to 547 (LPKEKADGTEQ) are enriched in basic and acidic residues. Residues 674–693 (PHNNPTVQQIVQLSPVMQDT) show a composition bias toward polar residues.

The protein belongs to the GOLGA6 family.

The polypeptide is Golgin subfamily A member 6D (GOLGA6D) (Homo sapiens (Human)).